A 65-amino-acid chain; its full sequence is Light-harvesting protein B800/830/1020 beta-2 chain (65 aa).

At 1–17 (TDIRTGLTDEECQEIHE) the chain is on the cytoplasmic side. A bacteriochlorophyll is bound by residues His-16 and Asn-34. The chain crosses the membrane as a helical span at residues 18-40 (MNMLGMHAYWSIGLIANALAYAW). Over 41–65 (RPFHQGRAGNRLEDHAPDYVRSALT) the chain is Periplasmic.

It belongs to the antenna complex beta subunit family. The core complex is formed by different alpha and beta chains, binding bacteriochlorophyll molecules, and arranged most probably in tetrameric structures disposed around the reaction center. The non-pigmented gamma chains may constitute additional components.

The protein localises to the cell inner membrane. Functionally, antenna complexes are light-harvesting systems, which transfer the excitation energy to the reaction centers. The polypeptide is Light-harvesting protein B800/830/1020 beta-2 chain (Halorhodospira halochloris (Ectothiorhodospira halochloris)).